Consider the following 874-residue polypeptide: Envelope glycoprotein B (874 aa).

The first 25 residues, 1 to 25 (MGVGGGPRVVLCLWCVAALLCQGVA), serve as a signal peptide directing secretion. Topologically, residues 26–727 (QEVVAETTTP…SGVISFFKNP (702 aa)) are virion surface. Cystine bridges form between C59/C523, C77/C479, C149/C214, C306/C353, and C546/C583. The tract at residues 116–122 (IYKGWSE) is involved in fusion and/or binding to host membrane. N171 is a glycosylation site (N-linked (GlcNAc...) asparagine; by host). Positions 200-208 (RNLLWSYTT) are involved in fusion and/or binding to host membrane. N-linked (GlcNAc...) asparagine; by host glycosylation is found at N247, N281, N302, N323, N348, N356, N376, N409, N412, N444, N558, N610, and N624. Positions 412–450 (NATASPTSTPTTSPRRRRRDTSSVSGGGNNGDNSTKEES) are disordered. Positions 673–725 (LDDSIDHGRDSFIQTLGDIMQDLGTIGKVVVNVASGVFSLFGSIVSGVISFFK) are hydrophobic membrane proximal region. A helical membrane pass occupies residues 728 to 748 (FGGMLLIVLIIAGVVVVYLFM). The Intravirion portion of the chain corresponds to 749–874 (TRSRSIYSAP…VEAGTADTGV (126 aa)). The tract at residues 830–874 (RRGGGGYQRLQRDGSDDEGDYEPLRRQDGGYDDVDVEAGTADTGV) is disordered. The short motif at 836–839 (YQRL) is the Internalization motif element.

The protein belongs to the herpesviridae glycoprotein B family. As to quaternary structure, homotrimer; disulfide-linked. Binds to heparan sulfate proteoglycans. Interacts with gH/gL heterodimer. Post-translationally, a proteolytic cleavage by host furin generates two subunits that remain linked by disulfide bonds.

It is found in the virion membrane. The protein localises to the host cell membrane. Its subcellular location is the host endosome membrane. The protein resides in the host Golgi apparatus membrane. In terms of biological role, envelope glycoprotein that forms spikes at the surface of virion envelope. Essential for the initial attachment to heparan sulfate moieties of the host cell surface proteoglycans. Involved in fusion of viral and cellular membranes leading to virus entry into the host cell. Following initial binding to its host receptors, membrane fusion is mediated by the fusion machinery composed at least of gB and the heterodimer gH/gL. May be involved in the fusion between the virion envelope and the outer nuclear membrane during virion egress. This Equus caballus (Horse) protein is Envelope glycoprotein B.